Consider the following 509-residue polypeptide: H/ACA ribonucleoprotein complex subunit DKC1 (509 aa).

The disordered stretch occupies residues 1 to 24 (MADAEVITFPKKHKKKKDRKPLQE). A2 carries the post-translational modification N-acetylalanine. The interval 2 to 21 (ADAEVITFPKKHKKKKDRKP) is nucleolar localization. Residues 10 to 19 (PKKHKKKKDR) show a composition bias toward basic residues. Residues K20, K39, and K43 each participate in a glycyl lysine isopeptide (Lys-Gly) (interchain with G-Cter in SUMO2) cross-link. The active-site Nucleophile is D125. K191 is covalently cross-linked (Glycyl lysine isopeptide (Lys-Gly) (interchain with G-Cter in SUMO2)). The PUA domain occupies 297–372 (KRLVMKDSAV…VAKIKRVIME (76 aa)). Position 387 is a phosphoserine (S387). K394 participates in a covalent cross-link: Glycyl lysine isopeptide (Lys-Gly) (interchain with G-Cter in SUMO2). K413 is covalently cross-linked (Glycyl lysine isopeptide (Lys-Gly) (interchain with G-Cter in SUMO1); alternate). A Glycyl lysine isopeptide (Lys-Gly) (interchain with G-Cter in SUMO2); alternate cross-link involves residue K413. A Glycyl lysine isopeptide (Lys-Gly) (interchain with G-Cter in SUMO2) cross-link involves residue K424. Residues 446 to 509 (KRKRDSESES…KVKVVEEMSE (64 aa)) form a nuclear and nucleolar localization region. The interval 447–509 (RKRDSESESD…KVKVVEEMSE (63 aa)) is disordered. A phosphoserine mark is found at S451, S453, and S455. T458 is modified (phosphothreonine). Residues 466-476 (EKKKKKDKKPK) show a composition bias toward basic residues. Phosphoserine is present on S481. A Phosphothreonine modification is found at T485. S508 is modified (phosphoserine).

This sequence belongs to the pseudouridine synthase TruB family. In terms of assembly, part of the H/ACA small nucleolar ribonucleoprotein (H/ACA snoRNP) complex, which contains NHP2/NOLA2, GAR1/NOLA1, NOP10/NOLA3, and DKC1/NOLA4, which is presumed to be the catalytic subunit. The complex contains a stable core formed by binding of one or two NOP10-DKC1 heterodimers to NHP2; GAR1 subsequently binds to this core via DKC1. The complex binds a box H/ACA small nucleolar RNA (snoRNA), which may target the specific site of modification within the RNA substrate. During assembly, the complex contains NAF1 instead of GAR1/NOLA1. The complex also interacts with TERC, which contains a 3'-terminal domain related to the box H/ACA snoRNAs. Specific interactions with snoRNAs or TERC are mediated by GAR1 and NHP2. Associates with NOLC1/NOPP140. H/ACA snoRNPs interact with the SMN complex, consisting of SMN1 or SMN2, GEMIN2/SIP1, DDX20/GEMIN3, and GEMIN4. This is mediated by interaction between GAR1 and SMN1 or SMN2. The SMN complex may be required for correct assembly of the H/ACA snoRNP complex. Component of the telomerase holoenzyme complex composed of one molecule of TERT, one molecule of WRAP53/TCAB1, two molecules of H/ACA ribonucleoprotein complex subunits DKC1, NOP10, NHP2 and GAR1, and a telomerase RNA template component (TERC). The telomerase holoenzyme complex is associated with TEP1, SMG6/EST1A and POT1. Interacts with SHQ1; this interaction may lead to the stabilization of DKC1, from the time of its synthesis until its association with NOP10, NHP2, and NAF1 at the nascent H/ACA RNA. Interacts with HMBOX1. Interacts with DHX36. As to expression, ubiquitously expressed, with elevated levels in Purkinje cells, the olfactory bulb, and Leydig cells of the testis.

It localises to the nucleus. The protein localises to the nucleolus. Its subcellular location is the cajal body. It carries out the reaction uridine in 5S rRNA = pseudouridine in 5S rRNA. Functionally, catalytic subunit of H/ACA small nucleolar ribonucleoprotein (H/ACA snoRNP) complex, which catalyzes pseudouridylation of rRNA. This involves the isomerization of uridine such that the ribose is subsequently attached to C5, instead of the normal N1. Each rRNA can contain up to 100 pseudouridine ('psi') residues, which may serve to stabilize the conformation of rRNAs. Required for ribosome biogenesis and telomere maintenance. Also required for correct processing or intranuclear trafficking of TERC, the RNA component of the telomerase reverse transcriptase (TERT) holoenzyme. In Mus musculus (Mouse), this protein is H/ACA ribonucleoprotein complex subunit DKC1 (Dkc1).